Reading from the N-terminus, the 426-residue chain is Synaptotagmin-13 (426 aa).

At 1 to 6 (MVLSVP) the chain is on the vesicular side. A helical transmembrane segment spans residues 7–29 (VIALGATLGTATSILALCGVTCL). Topologically, residues 30-426 (CRHMHPKKGL…QIAMWHQLHL (397 aa)) are cytoplasmic. C2 domains are found at residues 158-275 (QAPK…AQWG) and 287-422 (GTGE…AMWH).

This sequence belongs to the synaptotagmin family. In terms of assembly, interacts with NRXN1. Expressed in brain, spleen, kidney and testis.

The protein localises to the membrane. In terms of biological role, may be involved in transport vesicle docking to the plasma membrane. This Rattus norvegicus (Rat) protein is Synaptotagmin-13 (Syt13).